The sequence spans 198 residues: tRNA (pseudouridine(54)-N(1))-methyltransferase (198 aa).

Residues L130, G153, 176 to 181 (LSPLEL), and C186 each bind S-adenosyl-L-methionine.

This sequence belongs to the methyltransferase superfamily. TrmY family. In terms of assembly, homodimer.

The protein resides in the cytoplasm. The catalysed reaction is pseudouridine(54) in tRNA + S-adenosyl-L-methionine = N(1)-methylpseudouridine(54) in tRNA + S-adenosyl-L-homocysteine + H(+). In terms of biological role, specifically catalyzes the N1-methylation of pseudouridine at position 54 (Psi54) in tRNAs. The polypeptide is tRNA (pseudouridine(54)-N(1))-methyltransferase (Methanococcus maripaludis (strain C7 / ATCC BAA-1331)).